The following is a 298-amino-acid chain: N-acetylmuramic acid 6-phosphate etherase (298 aa).

In terms of domain architecture, SIS spans 54–217; the sequence is CISAIKNHGR…STVTMIKLGK (164 aa). Glu82 functions as the Proton donor in the catalytic mechanism. Glu113 is an active-site residue.

The protein belongs to the GCKR-like family. MurNAc-6-P etherase subfamily. As to quaternary structure, homodimer.

The catalysed reaction is N-acetyl-D-muramate 6-phosphate + H2O = N-acetyl-D-glucosamine 6-phosphate + (R)-lactate. The protein operates within amino-sugar metabolism; N-acetylmuramate degradation. In terms of biological role, specifically catalyzes the cleavage of the D-lactyl ether substituent of MurNAc 6-phosphate, producing GlcNAc 6-phosphate and D-lactate. This is N-acetylmuramic acid 6-phosphate etherase from Petrotoga mobilis (strain DSM 10674 / SJ95).